A 429-amino-acid polypeptide reads, in one-letter code: D-amino acid dehydrogenase (429 aa).

3–17 (VVVLGSGVVGVTSAY) provides a ligand contact to FAD.

The protein belongs to the DadA oxidoreductase family. Requires FAD as cofactor.

It catalyses the reaction a D-alpha-amino acid + A + H2O = a 2-oxocarboxylate + AH2 + NH4(+). It participates in amino-acid degradation; D-alanine degradation; NH(3) and pyruvate from D-alanine: step 1/1. Oxidative deamination of D-amino acids. This is D-amino acid dehydrogenase from Paraburkholderia xenovorans (strain LB400).